We begin with the raw amino-acid sequence, 52 residues long: UPF0181 protein NTHI1697 (52 aa).

It belongs to the UPF0181 family.

In Haemophilus influenzae (strain 86-028NP), this protein is UPF0181 protein NTHI1697.